Consider the following 501-residue polypeptide: L-arabinose isomerase (501 aa).

Positions 306, 333, 350, and 449 each coordinate Mn(2+).

This sequence belongs to the arabinose isomerase family. The cofactor is Mn(2+).

It carries out the reaction beta-L-arabinopyranose = L-ribulose. The protein operates within carbohydrate degradation; L-arabinose degradation via L-ribulose; D-xylulose 5-phosphate from L-arabinose (bacterial route): step 1/3. Its function is as follows. Catalyzes the conversion of L-arabinose to L-ribulose. This chain is L-arabinose isomerase, found in Mycolicibacterium smegmatis (strain ATCC 700084 / mc(2)155) (Mycobacterium smegmatis).